We begin with the raw amino-acid sequence, 243 residues long: UMP-CMP kinase 2 (243 aa).

G69 to T74 provides a ligand contact to ATP. The tract at residues S89–V118 is NMP. A ribonucleoside 5'-phosphate-binding positions include R95, K116–V118, and G143–R146. N150 provides a ligand contact to CMP. Positions G181–D189 are LID. ATP is bound at residue R182. The a ribonucleoside 5'-phosphate site is built by R186 and R197.

This sequence belongs to the adenylate kinase family. UMP-CMP kinase subfamily. Monomer. The cofactor is Mg(2+).

Its subcellular location is the cytoplasm. It is found in the nucleus. The enzyme catalyses UMP + ATP = UDP + ADP. It carries out the reaction CMP + ATP = CDP + ADP. It catalyses the reaction dCMP + ATP = dCDP + ADP. In terms of biological role, catalyzes the phosphorylation of pyrimidine nucleoside monophosphates at the expense of ATP. Plays an important role in de novo pyrimidine nucleotide biosynthesis. Has preference for UMP and CMP as phosphate acceptors. The sequence is that of UMP-CMP kinase 2 from Oryza sativa subsp. japonica (Rice).